The primary structure comprises 142 residues: 3-hydroxyacyl-[acyl-carrier-protein] dehydratase FabZ (142 aa).

His-49 is an active-site residue.

This sequence belongs to the thioester dehydratase family. FabZ subfamily.

It is found in the cytoplasm. The catalysed reaction is a (3R)-hydroxyacyl-[ACP] = a (2E)-enoyl-[ACP] + H2O. In terms of biological role, involved in unsaturated fatty acids biosynthesis. Catalyzes the dehydration of short chain beta-hydroxyacyl-ACPs and long chain saturated and unsaturated beta-hydroxyacyl-ACPs. The polypeptide is 3-hydroxyacyl-[acyl-carrier-protein] dehydratase FabZ (Deinococcus geothermalis (strain DSM 11300 / CIP 105573 / AG-3a)).